The chain runs to 414 residues: MANRQRVLGIVLAGGQGRRLLPLTADRAKPAVPFGGIYRLIDFVLSNLANAGFLKIVVLTQYKNHSLDRHITTTWRMSTLLGNYVTPVPAQQRVGPRWFSGSADAIFQSLNLVYDEQPDYILVFGADHIYRMDPRQMLEEHIASGASVTVAAVRVPRKDAHAFGVIQPAASGPERGRRVARFLEKPADTEGLGLPDAPDEVFASMGNYCFTTAALLDAVIRDAADERSAHDMGGNIIPMFVERGDAAVYDFHTNQVPGSTPRDHAYWRDVGTLDAYYDAHQDLVSVHPIFNLYNQDWPIYTHHRPLPPAKIVHDGTSVVDSLLSDGVIVADARVSRSVLSPSVYVDRGAVIEGCVLLDNVHIGRGAVVRNAIIDKNVVVPDGAAIGVDPQRDAERFTVSEGGIVVIAKNAVVEP.

Residues Gly-164, 184-185 (EK), and Ser-204 contribute to the alpha-D-glucose 1-phosphate site.

Belongs to the bacterial/plant glucose-1-phosphate adenylyltransferase family. In terms of assembly, homotetramer.

The enzyme catalyses alpha-D-glucose 1-phosphate + ATP + H(+) = ADP-alpha-D-glucose + diphosphate. Its pathway is glycan biosynthesis; glycogen biosynthesis. In terms of biological role, involved in the biosynthesis of ADP-glucose, a building block required for the elongation reactions to produce glycogen. Catalyzes the reaction between ATP and alpha-D-glucose 1-phosphate (G1P) to produce pyrophosphate and ADP-Glc. This is Glucose-1-phosphate adenylyltransferase from Acidothermus cellulolyticus (strain ATCC 43068 / DSM 8971 / 11B).